Here is a 439-residue protein sequence, read N- to C-terminus: Acyl-coenzyme A thioesterase 9, mitochondrial (439 aa).

A mitochondrion-targeting transit peptide spans 1 to 21 (MKRAAIRLWTLNKGLLTHGRG). HotDog ACOT-type domains are found at residues 85-209 (SYIE…RDSE) and 289-401 (EDTK…EKEV). Lys-102 carries the post-translational modification N6-acetyllysine.

Belongs to the acyl coenzyme A hydrolase family. In terms of assembly, interacts with NYAP1, NYAP2 and MYO16. As to expression, widely expressed.

It is found in the mitochondrion. The protein resides in the mitochondrion matrix. Its subcellular location is the mitochondrion inner membrane. The catalysed reaction is butanoyl-CoA + H2O = butanoate + CoA + H(+). It carries out the reaction propanoyl-CoA + H2O = propanoate + CoA + H(+). The enzyme catalyses hexadecanoyl-CoA + H2O = hexadecanoate + CoA + H(+). It catalyses the reaction octanoyl-CoA + H2O = octanoate + CoA + H(+). The catalysed reaction is decanoyl-CoA + H2O = decanoate + CoA + H(+). It carries out the reaction tetradecanoyl-CoA + H2O = tetradecanoate + CoA + H(+). The enzyme catalyses 4,8-dimethylnonanoyl-CoA + H2O = 4,8-dimethylnonanoate + CoA + H(+). It catalyses the reaction 3-methylbutanoyl-CoA + H2O = 3-methylbutanoate + CoA + H(+). The catalysed reaction is 2-methylpropanoyl-CoA + H2O = 2-methylpropanoate + CoA + H(+). The protein operates within lipid metabolism; fatty acid metabolism. Its activity is regulated as follows. Strongly inhibited by NADH and CoA. Mitochondrial acyl-CoA thioesterase. Catalyzes the hydrolysis of acyl-CoAs into free fatty acids and coenzyme A (CoA), regulating their respective intracellular levels. Shows a clear preference for hydrophobic short-, medium-, and long-chain saturated acyl-CoAs with some activity also with short-chain dicarboxylic CoA esters. Regulates both mitochondrial lipid and amino acid metabolism. The chain is Acyl-coenzyme A thioesterase 9, mitochondrial (Acot9) from Mus musculus (Mouse).